Consider the following 1152-residue polypeptide: Alpha-mannosidase 2x (1152 aa).

The Cytoplasmic segment spans residues 1 to 5; sequence MKLKK. Residues 6–26 traverse the membrane as a helical; Signal-anchor for type II membrane protein segment; sequence QVTVCGAAIFCVAVFSLYLML. The Lumenal portion of the chain corresponds to 27-796; that stretch reads DRVQHDPARH…VDEEQEQQME (770 aa). A coiled-coil region spans residues 43 to 74; it reads PRSQISVLQNRIEQLEQLLEENHDIISRIKDS. Residues His175 and Asp177 each coordinate Zn(2+). Residue Asn225 is glycosylated (N-linked (GlcNAc...) asparagine). Asp289 contacts Zn(2+). Asp289 acts as the Nucleophile in catalysis. A glycan (N-linked (GlcNAc...) asparagine) is linked at Asn305. Residue His569 participates in Zn(2+) binding.

Belongs to the glycosyl hydrolase 38 family. In terms of assembly, homodimer; disulfide-linked. Interacts with MGAT4D. It depends on Zn(2+) as a cofactor.

It localises to the golgi apparatus membrane. It catalyses the reaction N(4)-{beta-D-GlcNAc-(1-&gt;2)-alpha-D-Man-(1-&gt;3)-[alpha-D-Man-(1-&gt;3)-[alpha-D-Man-(1-&gt;6)]-alpha-D-Man-(1-&gt;6)]-beta-D-Man-(1-&gt;4)-beta-D-GlcNAc-(1-&gt;4)-beta-D-GlcNAc}-L-asparaginyl-[protein] + 2 H2O = 2 alpha-D-mannopyranose + an N(4)-{beta-D-GlcNAc-(1-&gt;2)-alpha-D-Man-(1-&gt;3)-[alpha-D-Man-(1-&gt;6)]-beta-D-Man-(1-&gt;4)-beta-D-GlcNAc-(1-&gt;4)-beta-D-GlcNAc}-L-asparaginyl-[protein]. It functions in the pathway protein modification; protein glycosylation. In terms of biological role, catalyzes the first committed step in the biosynthesis of complex N-glycans. It controls conversion of high mannose to complex N-glycans; the final hydrolytic step in the N-glycan maturation pathway. The protein is Alpha-mannosidase 2x (Man2a2) of Mus musculus (Mouse).